Consider the following 315-residue polypeptide: Voltage-dependent calcium channel gamma-3 subunit (315 aa).

4 helical membrane passes run 8-28, 104-124, 135-155, and 181-201; these read IQML…TIAV, SSVF…CVAA, ILSA…GIIV, and FGAF…HIYI. Positions 232–253 are disordered; sequence RRRSSSRSTEPRSRDLSPISKG. A Phosphoserine modification is found at serine 248.

This sequence belongs to the PMP-22/EMP/MP20 family. CACNG subfamily. In terms of assembly, the L-type calcium channel is composed of five subunits: alpha-1, alpha-2/delta, beta and gamma. Acts as an auxiliary subunit for AMPA-selective glutamate receptors (AMPARs). Found in a complex with GRIA1, GRIA2, GRIA3, GRIA4, CNIH2, CNIH3, CACNG2, CACNG4, CACNG5, CACNG7 and CACNG8. Interacts with AP4M1 and GRIA1; associates GRIA1 with the adaptor protein complex 4 (AP-4) to target GRIA1 to the somatodendritic compartment of neurons.

It is found in the membrane. In terms of biological role, regulates the trafficking to the somatodendritic compartment and gating properties of AMPA-selective glutamate receptors (AMPARs). Promotes their targeting to the cell membrane and synapses and modulates their gating properties by slowing their rates of activation, deactivation and desensitization. Does not show subunit-specific AMPA receptor regulation and regulates all AMPAR subunits. Thought to stabilize the calcium channel in an inactivated (closed) state. The sequence is that of Voltage-dependent calcium channel gamma-3 subunit (Cacng3) from Mus musculus (Mouse).